We begin with the raw amino-acid sequence, 345 residues long: Tetraacyldisaccharide 4'-kinase (345 aa).

61–68 (TAGGTGKT) serves as a coordination point for ATP.

This sequence belongs to the LpxK family.

It carries out the reaction a lipid A disaccharide + ATP = a lipid IVA + ADP + H(+). It participates in glycolipid biosynthesis; lipid IV(A) biosynthesis; lipid IV(A) from (3R)-3-hydroxytetradecanoyl-[acyl-carrier-protein] and UDP-N-acetyl-alpha-D-glucosamine: step 6/6. In terms of biological role, transfers the gamma-phosphate of ATP to the 4'-position of a tetraacyldisaccharide 1-phosphate intermediate (termed DS-1-P) to form tetraacyldisaccharide 1,4'-bis-phosphate (lipid IVA). This Xanthomonas euvesicatoria pv. vesicatoria (strain 85-10) (Xanthomonas campestris pv. vesicatoria) protein is Tetraacyldisaccharide 4'-kinase.